The chain runs to 136 residues: Putative pre-16S rRNA nuclease (136 aa).

The protein belongs to the YqgF nuclease family.

Its subcellular location is the cytoplasm. Could be a nuclease involved in processing of the 5'-end of pre-16S rRNA. The polypeptide is Putative pre-16S rRNA nuclease (Francisella tularensis subsp. tularensis (strain WY96-3418)).